Reading from the N-terminus, the 47-residue chain is Large ribosomal subunit protein bL36B (47 aa).

The protein belongs to the bacterial ribosomal protein bL36 family.

The sequence is that of Large ribosomal subunit protein bL36B from Pectobacterium atrosepticum (strain SCRI 1043 / ATCC BAA-672) (Erwinia carotovora subsp. atroseptica).